Reading from the N-terminus, the 615-residue chain is Kelch-like protein 26 (615 aa).

Residues methionine 1 to proline 21 are compositionally biased toward gly residues. Residues methionine 1–alanine 35 are disordered. Alanine 2 carries the post-translational modification N-acetylalanine. The 68-residue stretch at leucine 63–leucine 130 folds into the BTB domain. Residues cysteine 165–glutamine 266 form the BACK domain. Kelch repeat units lie at residues serine 310–asparagine 361, phenylalanine 362–glycine 413, methionine 414–glycine 460, arginine 461–glycine 508, isoleucine 510–arginine 559, and isoleucine 561–leucine 608.

Its function is as follows. May play a role in endo(sarco)plasmic reticulum (ER/SR) mitochondrial signaling. May be part of the ubiquitin-proteasome system (UPS) and affect ubiquitination and degradation of target substrates in cardiomyocytes. The chain is Kelch-like protein 26 (KLHL26) from Homo sapiens (Human).